Reading from the N-terminus, the 388-residue chain is Succinate--CoA ligase [ADP-forming] subunit beta (388 aa).

ATP-binding positions include Lys-46, 53–55 (GRG), Glu-99, Cys-102, and Glu-107. Mg(2+) is bound by residues Asn-199 and Asp-213. Substrate is bound by residues Asn-264 and 321–323 (GIV).

It belongs to the succinate/malate CoA ligase beta subunit family. In terms of assembly, heterotetramer of two alpha and two beta subunits. Mg(2+) serves as cofactor.

The enzyme catalyses succinate + ATP + CoA = succinyl-CoA + ADP + phosphate. The catalysed reaction is GTP + succinate + CoA = succinyl-CoA + GDP + phosphate. The protein operates within carbohydrate metabolism; tricarboxylic acid cycle; succinate from succinyl-CoA (ligase route): step 1/1. Functionally, succinyl-CoA synthetase functions in the citric acid cycle (TCA), coupling the hydrolysis of succinyl-CoA to the synthesis of either ATP or GTP and thus represents the only step of substrate-level phosphorylation in the TCA. The beta subunit provides nucleotide specificity of the enzyme and binds the substrate succinate, while the binding sites for coenzyme A and phosphate are found in the alpha subunit. The sequence is that of Succinate--CoA ligase [ADP-forming] subunit beta from Actinobacillus pleuropneumoniae serotype 3 (strain JL03).